The following is a 312-amino-acid chain: Secreted RxLR effector protein 14 (312 aa).

Positions 1 to 20 (MHSFKLLLALIVAICTSCDA) are cleaved as a signal peptide. Positions 46–61 (RLLRAKDGKVRADEER) match the RxLR-dEER motif.

This sequence belongs to the RxLR effector family.

It localises to the secreted. It is found in the host nucleus. In terms of biological role, secreted effector that completely suppresses the host cell death induced by cell death-inducing proteins. In Plasmopara viticola (Downy mildew of grapevine), this protein is Secreted RxLR effector protein 14.